Reading from the N-terminus, the 813-residue chain is Probable E3 ubiquitin-protein ligase hulA (813 aa).

Residues 1–109 (MGSNLPAQPN…QMGGDEMLTR (109 aa)) form the C2 domain. 2 disordered regions span residues 131–235 (NLST…GWER) and 251–351 (RTTT…YFVD). Positions 148–167 (VQSSTSSGLVPQVAPSSSHP) are enriched in polar residues. A compositionally biased stretch (low complexity) spans 188 to 215 (RVPSTTRPSSTAAPASAAGAAVSNSHGS). A WW 1 domain is found at 227 to 260 (GRLPAGWERREDNLGRTYYVDHNTRTTTWTRPSS). Positions 251–264 (RTTTWTRPSSNYNE) are enriched in polar residues. Over residues 265-292 (HAQRSQREANMQLERRAHQSRMLPEDRT) the composition is skewed to basic and acidic residues. The span at 293–307 (GANSPNLPESSQQAH) shows a compositional bias: polar residues. A compositionally biased stretch (low complexity) spans 322–331 (ATGATTAGTG). 2 consecutive WW domains span residues 331 to 364 (GELP…DPRR) and 391 to 424 (GPLP…DPRL). One can recognise an HECT domain in the interval 480-813 (SASDLKKRLM…VEETLGFGQE (334 aa)). Cys-781 functions as the Glycyl thioester intermediate in the catalytic mechanism.

The protein belongs to the RSP5/NEDD4 family. As to quaternary structure, interacts with creD.

The protein localises to the cytoplasm. The enzyme catalyses S-ubiquitinyl-[E2 ubiquitin-conjugating enzyme]-L-cysteine + [acceptor protein]-L-lysine = [E2 ubiquitin-conjugating enzyme]-L-cysteine + N(6)-ubiquitinyl-[acceptor protein]-L-lysine.. It participates in protein modification; protein ubiquitination. Functionally, E3 ubiquitin-protein ligase which accepts ubiquitin from an E2 ubiquitin-conjugating enzyme in the form of a thioester and then directly transfers the ubiquitin to targeted substrates. Probably involved in the regulatory network controlling carbon source utilization. This is Probable E3 ubiquitin-protein ligase hulA (hulA) from Aspergillus fumigatus (strain CBS 144.89 / FGSC A1163 / CEA10) (Neosartorya fumigata).